Here is a 492-residue protein sequence, read N- to C-terminus: Bifunctional purine biosynthesis protein PurH (492 aa).

One can recognise an MGS-like domain in the interval 1-144 (MKKAILSVSN…KNFKHVTTIV (144 aa)).

This sequence belongs to the PurH family.

It catalyses the reaction (6R)-10-formyltetrahydrofolate + 5-amino-1-(5-phospho-beta-D-ribosyl)imidazole-4-carboxamide = 5-formamido-1-(5-phospho-D-ribosyl)imidazole-4-carboxamide + (6S)-5,6,7,8-tetrahydrofolate. It carries out the reaction IMP + H2O = 5-formamido-1-(5-phospho-D-ribosyl)imidazole-4-carboxamide. It participates in purine metabolism; IMP biosynthesis via de novo pathway; 5-formamido-1-(5-phospho-D-ribosyl)imidazole-4-carboxamide from 5-amino-1-(5-phospho-D-ribosyl)imidazole-4-carboxamide (10-formyl THF route): step 1/1. The protein operates within purine metabolism; IMP biosynthesis via de novo pathway; IMP from 5-formamido-1-(5-phospho-D-ribosyl)imidazole-4-carboxamide: step 1/1. In Staphylococcus epidermidis (strain ATCC 35984 / DSM 28319 / BCRC 17069 / CCUG 31568 / BM 3577 / RP62A), this protein is Bifunctional purine biosynthesis protein PurH.